Here is a 498-residue protein sequence, read N- to C-terminus: Protein YhjJ (498 aa).

The first 24 residues, 1–24, serve as a signal peptide directing secretion; sequence MQGTKIRLLAGGLLMMATAGYVQA.

It belongs to the peptidase M16 family.

The protein localises to the periplasm. The sequence is that of Protein YhjJ (yhjJ) from Escherichia coli (strain K12).